The sequence spans 462 residues: ATP synthase subunit beta (462 aa).

152–159 serves as a coordination point for ATP; sequence GGAGVGKT.

It belongs to the ATPase alpha/beta chains family. F-type ATPases have 2 components, CF(1) - the catalytic core - and CF(0) - the membrane proton channel. CF(1) has five subunits: alpha(3), beta(3), gamma(1), delta(1), epsilon(1). CF(0) has three main subunits: a(1), b(2) and c(9-12). The alpha and beta chains form an alternating ring which encloses part of the gamma chain. CF(1) is attached to CF(0) by a central stalk formed by the gamma and epsilon chains, while a peripheral stalk is formed by the delta and b chains.

It is found in the cell inner membrane. It catalyses the reaction ATP + H2O + 4 H(+)(in) = ADP + phosphate + 5 H(+)(out). Its function is as follows. Produces ATP from ADP in the presence of a proton gradient across the membrane. The catalytic sites are hosted primarily by the beta subunits. This Blochmanniella pennsylvanica (strain BPEN) protein is ATP synthase subunit beta.